The sequence spans 196 residues: Nucleoid occlusion factor SlmA (196 aa).

Residues 7–68 (TNRREEILQA…GLIEFIEEAL (62 aa)) enclose the HTH tetR-type domain. Positions 31–50 (TTAKLAKQVGVSEAALYRHF) form a DNA-binding region, H-T-H motif. A coiled-coil region spans residues 110–142 (HALMFENERLRDRINQLFERIETQLRQILRERK).

The protein belongs to the nucleoid occlusion factor SlmA family. Homodimer. Interacts with FtsZ.

Its subcellular location is the cytoplasm. The protein localises to the nucleoid. In terms of biological role, required for nucleoid occlusion (NO) phenomenon, which prevents Z-ring formation and cell division over the nucleoid. Acts as a DNA-associated cell division inhibitor that binds simultaneously chromosomal DNA and FtsZ, and disrupts the assembly of FtsZ polymers. SlmA-DNA-binding sequences (SBS) are dispersed on non-Ter regions of the chromosome, preventing FtsZ polymerization at these regions. This chain is Nucleoid occlusion factor SlmA, found in Vibrio campbellii (strain ATCC BAA-1116).